The primary structure comprises 202 residues: Glycerol-3-phosphate acyltransferase (202 aa).

6 helical membrane passes run 2–22 (MIIV…GFVI), 54–74 (FLVT…PLWL), 85–105 (FFTN…YPVY), 120–140 (VVLG…FIVL), 141–161 (KIFK…VIGS), and 162–182 (LIIQ…ILII).

The protein belongs to the PlsY family. In terms of assembly, probably interacts with PlsX.

It is found in the cell membrane. It catalyses the reaction an acyl phosphate + sn-glycerol 3-phosphate = a 1-acyl-sn-glycero-3-phosphate + phosphate. The protein operates within lipid metabolism; phospholipid metabolism. Functionally, catalyzes the transfer of an acyl group from acyl-phosphate (acyl-PO(4)) to glycerol-3-phosphate (G3P) to form lysophosphatidic acid (LPA). This enzyme utilizes acyl-phosphate as fatty acyl donor, but not acyl-CoA or acyl-ACP. The sequence is that of Glycerol-3-phosphate acyltransferase from Staphylococcus aureus (strain Mu3 / ATCC 700698).